The primary structure comprises 88 residues: Small ribosomal subunit protein uS15 (88 aa).

The protein belongs to the universal ribosomal protein uS15 family. Part of the 30S ribosomal subunit. Forms a bridge to the 50S subunit in the 70S ribosome, contacting the 23S rRNA.

In terms of biological role, one of the primary rRNA binding proteins, it binds directly to 16S rRNA where it helps nucleate assembly of the platform of the 30S subunit by binding and bridging several RNA helices of the 16S rRNA. Functionally, forms an intersubunit bridge (bridge B4) with the 23S rRNA of the 50S subunit in the ribosome. The protein is Small ribosomal subunit protein uS15 of Halothermothrix orenii (strain H 168 / OCM 544 / DSM 9562).